The chain runs to 266 residues: HLA class II histocompatibility antigen, DR beta 5 chain (266 aa).

The first 29 residues, 1 to 29 (MVCLKLPGGSYMAKLTVTLMVLSSPLALA), serve as a signal peptide directing secretion. The interval 30–124 (GDTRPRFLQQ…GESFTVQRRV (95 aa)) is beta-1. Over 30 to 227 (GDTRPRFLQQ…RAQSESAQSK (198 aa)) the chain is Extracellular. Disulfide bonds link cysteine 44–cysteine 108 and cysteine 146–cysteine 202. Residue asparagine 48 is glycosylated (N-linked (GlcNAc...) asparagine). Residues 125 to 227 (EPKVTVYPAR…RAQSESAQSK (103 aa)) are beta-2. Positions 126 to 214 (PKVTVYPART…EHPSVTSPLT (89 aa)) constitute an Ig-like C1-type domain. Residues 228 to 248 (MLSGVGGFVLGLLFLGAGLFI) form a helical membrane-spanning segment. The Cytoplasmic portion of the chain corresponds to 249-266 (YFKNQKGHSGLHPTGLVS).

It belongs to the MHC class II family. Heterodimer of an alpha and a beta subunit; also referred as MHC class II molecule. In the endoplasmic reticulum (ER) it forms a heterononamer; 3 MHC class II molecules bind to a CD74 homotrimer (also known as invariant chain or HLA class II histocompatibility antigen gamma chain). In the endosomal/lysosomal system; CD74 undergoes sequential degradation by various proteases; leaving a small fragment termed CLIP on each MHC class II molecule. MHC class II molecule interacts with HLA_DM, and HLA_DO in B-cells, in order to release CLIP and facilitate the binding of antigenic peptides. Post-translationally, ubiquitinated by MARCH1 and MARCH8 at Lys-254 leading to down-regulation of MHC class II.

It is found in the cell membrane. The protein resides in the endoplasmic reticulum membrane. The protein localises to the golgi apparatus. It localises to the trans-Golgi network membrane. Its subcellular location is the endosome membrane. It is found in the lysosome membrane. The protein resides in the late endosome membrane. Binds peptides derived from antigens that access the endocytic route of antigen presenting cells (APC) and presents them on the cell surface for recognition by the CD4 T-cells. The peptide binding cleft accommodates peptides of 10-30 residues. The peptides presented by MHC class II molecules are generated mostly by degradation of proteins that access the endocytic route, where they are processed by lysosomal proteases and other hydrolases. Exogenous antigens that have been endocytosed by the APC are thus readily available for presentation via MHC II molecules, and for this reason this antigen presentation pathway is usually referred to as exogenous. As membrane proteins on their way to degradation in lysosomes as part of their normal turn-over are also contained in the endosomal/lysosomal compartments, exogenous antigens must compete with those derived from endogenous components. Autophagy is also a source of endogenous peptides, autophagosomes constitutively fuse with MHC class II loading compartments. In addition to APCs, other cells of the gastrointestinal tract, such as epithelial cells, express MHC class II molecules and CD74 and act as APCs, which is an unusual trait of the GI tract. To produce a MHC class II molecule that presents an antigen, three MHC class II molecules (heterodimers of an alpha and a beta chain) associate with a CD74 trimer in the ER to form a heterononamer. Soon after the entry of this complex into the endosomal/lysosomal system where antigen processing occurs, CD74 undergoes a sequential degradation by various proteases, including CTSS and CTSL, leaving a small fragment termed CLIP (class-II-associated invariant chain peptide). The removal of CLIP is facilitated by HLA-DM via direct binding to the alpha-beta-CLIP complex so that CLIP is released. HLA-DM stabilizes MHC class II molecules until primary high affinity antigenic peptides are bound. The MHC II molecule bound to a peptide is then transported to the cell membrane surface. In B-cells, the interaction between HLA-DM and MHC class II molecules is regulated by HLA-DO. Primary dendritic cells (DCs) also to express HLA-DO. Lysosomal microenvironment has been implicated in the regulation of antigen loading into MHC II molecules, increased acidification produces increased proteolysis and efficient peptide loading. The sequence is that of HLA class II histocompatibility antigen, DR beta 5 chain from Homo sapiens (Human).